The primary structure comprises 325 residues: HTH-type transcriptional regulator VqsM (325 aa).

One can recognise an HTH araC/xylS-type domain in the interval 226 to 323 (QRIELFLDSI…GQSTTEFRNS (98 aa)). 2 DNA-binding regions (H-T-H motif) span residues 243–264 (VTTA…ADEG) and 290–313 (VDRI…RRWT).

In terms of biological role, transcriptional regulator involved in both the repression (at least 99 genes, such as mexR and algU) and in the activation (at least 203 genes, such as mvfR, rsaL, vqsR and rpoS) of regulatory or putative regulatory proteins which are implicated in quorum sensing, virulence and multidrug resistance. In Pseudomonas aeruginosa (strain ATCC 15692 / DSM 22644 / CIP 104116 / JCM 14847 / LMG 12228 / 1C / PRS 101 / PAO1), this protein is HTH-type transcriptional regulator VqsM (vqsM).